The following is a 366-amino-acid chain: Histidinol-phosphate aminotransferase (366 aa).

N6-(pyridoxal phosphate)lysine is present on Lys-226.

This sequence belongs to the class-II pyridoxal-phosphate-dependent aminotransferase family. Histidinol-phosphate aminotransferase subfamily. Requires pyridoxal 5'-phosphate as cofactor.

It catalyses the reaction L-histidinol phosphate + 2-oxoglutarate = 3-(imidazol-4-yl)-2-oxopropyl phosphate + L-glutamate. Its pathway is amino-acid biosynthesis; L-histidine biosynthesis; L-histidine from 5-phospho-alpha-D-ribose 1-diphosphate: step 7/9. The chain is Histidinol-phosphate aminotransferase from Methanosarcina barkeri (strain Fusaro / DSM 804).